Consider the following 65-residue polypeptide: MSDKCGNCDCADKSQCVKKGTSYGVVIVDAEKSHFEMAEEVGYEENDGKCKCTTGCSCAGCNCGK.

It belongs to the metallothionein superfamily. Type 15 family. As to expression, expressed in leaves and rachis.

Metallothioneins have a high content of cysteine residues that bind various heavy metals. The protein is Metallothionein-like protein 3B (MT3B) of Oryza sativa subsp. japonica (Rice).